The following is a 315-amino-acid chain: Cell division protein FtsZ (315 aa).

Residues 55-57, Glu98, Arg102, and Asp146 each bind GTP; that span reads GTG.

This sequence belongs to the FtsZ family. In terms of assembly, homodimer. Polymerizes to form a dynamic ring structure in a strictly GTP-dependent manner. Interacts directly with several other division proteins.

It localises to the cytoplasm. Essential cell division protein that forms a contractile ring structure (Z ring) at the future cell division site. The regulation of the ring assembly controls the timing and the location of cell division. One of the functions of the FtsZ ring is to recruit other cell division proteins to the septum to produce a new cell wall between the dividing cells. Binds GTP and shows GTPase activity. This is Cell division protein FtsZ from Wolbachia pipientis.